The following is a 70-amino-acid chain: SPbeta prophage-derived uncharacterized HTH-type transcriptional regulator YopO (70 aa).

Positions 5–59 constitute an HTH cro/C1-type domain; sequence IKQLMVKRGITIEELSRETMIDMQTLNKIIEMPDESDVTTIKLIALVLNVSIDEL. Residues 16 to 35 constitute a DNA-binding region (H-T-H motif); it reads IEELSRETMIDMQTLNKIIE.

This Bacillus subtilis (strain 168) protein is SPbeta prophage-derived uncharacterized HTH-type transcriptional regulator YopO (yopO).